The primary structure comprises 369 residues: Anhydro-N-acetylmuramic acid kinase (369 aa).

12 to 19 is a binding site for ATP; the sequence is GTSLDGVD.

Belongs to the anhydro-N-acetylmuramic acid kinase family.

The catalysed reaction is 1,6-anhydro-N-acetyl-beta-muramate + ATP + H2O = N-acetyl-D-muramate 6-phosphate + ADP + H(+). It participates in amino-sugar metabolism; 1,6-anhydro-N-acetylmuramate degradation. Its pathway is cell wall biogenesis; peptidoglycan recycling. Its function is as follows. Catalyzes the specific phosphorylation of 1,6-anhydro-N-acetylmuramic acid (anhMurNAc) with the simultaneous cleavage of the 1,6-anhydro ring, generating MurNAc-6-P. Is required for the utilization of anhMurNAc either imported from the medium or derived from its own cell wall murein, and thus plays a role in cell wall recycling. The polypeptide is Anhydro-N-acetylmuramic acid kinase (Escherichia coli O8 (strain IAI1)).